A 395-amino-acid polypeptide reads, in one-letter code: 8-amino-7-oxononanoate synthase (395 aa).

Arg-24 provides a ligand contact to substrate. 111–112 contributes to the pyridoxal 5'-phosphate binding site; the sequence is GF. A substrate-binding site is contributed by His-136. Pyridoxal 5'-phosphate-binding positions include Ser-184, 209-212, and 240-243; these read DDAH and TLSK. N6-(pyridoxal phosphate)lysine is present on Lys-243. Thr-357 serves as a coordination point for substrate.

Belongs to the class-II pyridoxal-phosphate-dependent aminotransferase family. BioF subfamily. As to quaternary structure, homodimer. Pyridoxal 5'-phosphate serves as cofactor.

The catalysed reaction is 6-carboxyhexanoyl-[ACP] + L-alanine + H(+) = (8S)-8-amino-7-oxononanoate + holo-[ACP] + CO2. The protein operates within cofactor biosynthesis; biotin biosynthesis. Functionally, catalyzes the decarboxylative condensation of pimeloyl-[acyl-carrier protein] and L-alanine to produce 8-amino-7-oxononanoate (AON), [acyl-carrier protein], and carbon dioxide. The protein is 8-amino-7-oxononanoate synthase of Alkaliphilus oremlandii (strain OhILAs) (Clostridium oremlandii (strain OhILAs)).